A 37-amino-acid chain; its full sequence is Large ribosomal subunit protein bL36 (37 aa).

This sequence belongs to the bacterial ribosomal protein bL36 family.

This is Large ribosomal subunit protein bL36 from Staphylococcus aureus (strain Mu3 / ATCC 700698).